A 617-amino-acid chain; its full sequence is Probable Xaa-Pro aminopeptidase P (617 aa).

The Mn(2+) site is built by Asp-414, Asp-425, Glu-523, and Glu-537.

Belongs to the peptidase M24B family. Mn(2+) serves as cofactor.

The enzyme catalyses Release of any N-terminal amino acid, including proline, that is linked to proline, even from a dipeptide or tripeptide.. Catalyzes the removal of a penultimate prolyl residue from the N-termini of peptides. The protein is Probable Xaa-Pro aminopeptidase P (AMPP) of Ajellomyces capsulatus (strain G186AR / H82 / ATCC MYA-2454 / RMSCC 2432) (Darling's disease fungus).